A 590-amino-acid polypeptide reads, in one-letter code: Keratin, type II cytoskeletal 5 (590 aa).

A compositionally biased stretch (low complexity) spans 1–18 (MSRQSSVSFRSGGSRSFS). Residues 1–20 (MSRQSSVSFRSGGSRSFSTA) form a disordered region. Residues 1 to 167 (MSRQSSVSFR…DPSIQRVRTE (167 aa)) are head. Ser5, Ser8, Ser16, and Ser21 each carry phosphoserine. Position 24 is a phosphothreonine; by CDK1 (Thr24). A phosphoserine mark is found at Ser26, Ser36, Ser50, Ser64, Ser71, Ser75, and Ser82. A Phosphothreonine; by CDK1 modification is found at Thr151. The coil 1A stretch occupies residues 168–203 (EREQIKTLNNKFASFIDKVRFLEQQNKVLDTKWTLL). The IF rod domain occupies 168-481 (EREQIKTLNN…KLLEGEECRL (314 aa)). The interval 204–222 (QEQGTKTVRQNLEPLFEQY) is linker 1. The segment at 223-315 (INNLRRQLDS…FFDAELSQMQ (93 aa)) is coil 1B. Residues 316-338 (THVSDTSVVLSMDNNRNLDLDSI) are linker 12. The segment at 339–477 (IAEVKAQYEE…ATYRKLLEGE (139 aa)) is coil 2. Residues 478-590 (ECRLSGEGVG…TSSSRKSFKS (113 aa)) are tail. The interval 566-590 (GSGGGSSSSVKFVSTTSSSRKSFKS) is disordered. Residues 572-590 (SSSVKFVSTTSSSRKSFKS) show a composition bias toward low complexity.

This sequence belongs to the intermediate filament family. Heterodimer of a type I and a type II keratin. Heterodimer with type I keratin KRT25 leading to the formation of keratin intermediate filament (KIF) network. Forms a heterodimer (via 2B domains) with KRT14 (via 2B domains). Interacts with PLEC isoform 1C, when in a heterodimer with KRT14. Interacts with TCHP. Interacts with EPPK1. Interacts with AMELX. Interacts with PKP1 (via N-terminus) and PKP2. Post-translationally, phosphorylated by CDK1, AURKB and Rho-kinase, phosphorylation is regulated by the cell cycle. Thr-24 phosphorylation, mediated by CDK1, peaks during prometaphase or metaphase cells with phosphorylated filamentous structures evident throughout the cytoplasm during early mitosis. CDK1 phosphorylates Thr-24 in mitotic cells at the site of injury. O-glycosylated. Expressed in corneal epithelium (at protein level). Expressed in keratinocytes (at protein level).

The protein localises to the cytoplasm. In terms of biological role, required for the formation of keratin intermediate filaments in the basal epidermis and maintenance of the skin barrier in response to mechanical stress. Regulates the recruitment of Langerhans cells to the epidermis, potentially by modulation of the abundance of macrophage chemotactic cytokines, macrophage inflammatory cytokines and CTNND1 localization in keratinocytes. The polypeptide is Keratin, type II cytoskeletal 5 (KRT5) (Homo sapiens (Human)).